A 332-amino-acid chain; its full sequence is MPLEAQDAVYVALELALAALSVTGNVLVCAAVGTSSALQTPTNYFLVSLAAADVAVGLFAIPFAVTISLGFCTDFHSCLFLACFVLVLTQSSIFSLLAVAVDRYLAVRVPLRYKSLVTGARARGVIAALWVLAFGIGLTPFLGWNDRKIATNCTEPGDAATNVSCCLIRCLFENVVPMSYMVYFNFFGCVLPPLLIMLVIYVKIFLVACRQLQRTELMDHSRTVLQREIHAAKSLALIVGIFALCWLPVHTINCASLFQPTWAKVKPKWAINTAILLSHANSAVNPIVYAYRNRDFRYTFHKIISRYILCRTHILKSGEGQVGSQPTLQLGL.

The Extracellular portion of the chain corresponds to Met1–Ala8. The chain crosses the membrane as a helical span at residues Val9–Gly33. Over Thr34 to Asn43 the chain is Cytoplasmic. A helical transmembrane segment spans residues Tyr44–Ile67. Over Ser68–Cys78 the chain is Extracellular. Cys78 and Cys170 are disulfide-bonded. A helical membrane pass occupies residues Leu79–Val101. Over Asp102 to Arg121 the chain is Cytoplasmic. The chain crosses the membrane as a helical span at residues Ala122–Trp144. The Extracellular portion of the chain corresponds to Asn145–Pro177. Residues Asn152 and Asn162 are each glycosylated (N-linked (GlcNAc...) asparagine). Glu173 is a binding site for adenosine. Residues Met178–Val202 form a helical membrane-spanning segment. Residues Lys203–Ser234 are Cytoplasmic-facing. A helical transmembrane segment spans residues Leu235 to Phe258. Asn253 contacts adenosine. Over Gln259–Lys266 the chain is Extracellular. A helical membrane pass occupies residues Pro267–Ala290. Adenosine contacts are provided by Ser278 and His279. Residues Tyr291 to Leu332 are Cytoplasmic-facing. A lipid anchor (S-palmitoyl cysteine) is attached at Cys310.

This sequence belongs to the G-protein coupled receptor 1 family.

It is found in the cell membrane. Its function is as follows. Receptor for adenosine. The activity of this receptor is mediated by G proteins which activate adenylyl cyclase. This chain is Adenosine receptor A2b (ADORA2B), found in Bos taurus (Bovine).